The chain runs to 220 residues: Deoxyribose-phosphate aldolase 1 (220 aa).

The active-site Proton donor/acceptor is Asp89. The Schiff-base intermediate with acetaldehyde role is filled by Lys151. The active-site Proton donor/acceptor is the Lys180.

This sequence belongs to the DeoC/FbaB aldolase family. DeoC type 1 subfamily.

It localises to the cytoplasm. It carries out the reaction 2-deoxy-D-ribose 5-phosphate = D-glyceraldehyde 3-phosphate + acetaldehyde. It participates in carbohydrate degradation; 2-deoxy-D-ribose 1-phosphate degradation; D-glyceraldehyde 3-phosphate and acetaldehyde from 2-deoxy-alpha-D-ribose 1-phosphate: step 2/2. Catalyzes a reversible aldol reaction between acetaldehyde and D-glyceraldehyde 3-phosphate to generate 2-deoxy-D-ribose 5-phosphate. The protein is Deoxyribose-phosphate aldolase 1 of Staphylococcus aureus (strain bovine RF122 / ET3-1).